Consider the following 151-residue polypeptide: Ribosome maturation factor RimP (151 aa).

This sequence belongs to the RimP family.

It localises to the cytoplasm. Its function is as follows. Required for maturation of 30S ribosomal subunits. The polypeptide is Ribosome maturation factor RimP (Alcanivorax borkumensis (strain ATCC 700651 / DSM 11573 / NCIMB 13689 / SK2)).